A 731-amino-acid chain; its full sequence is 1,4-alpha-glucan branching enzyme GlgB (731 aa).

Asp409 serves as the catalytic Nucleophile. Glu462 acts as the Proton donor in catalysis.

Belongs to the glycosyl hydrolase 13 family. GlgB subfamily. As to quaternary structure, monomer.

It catalyses the reaction Transfers a segment of a (1-&gt;4)-alpha-D-glucan chain to a primary hydroxy group in a similar glucan chain.. The protein operates within glycan biosynthesis; glycogen biosynthesis. Catalyzes the formation of the alpha-1,6-glucosidic linkages in glycogen by scission of a 1,4-alpha-linked oligosaccharide from growing alpha-1,4-glucan chains and the subsequent attachment of the oligosaccharide to the alpha-1,6 position. The chain is 1,4-alpha-glucan branching enzyme GlgB from Roseobacter denitrificans (strain ATCC 33942 / OCh 114) (Erythrobacter sp. (strain OCh 114)).